The sequence spans 360 residues: D-alanine--D-alanine ligase (360 aa).

In terms of domain architecture, ATP-grasp spans 134 to 343 (KILAQRVGVP…YTELITRLIE (210 aa)). 169–224 (AEKLGRDMFVKPSNQGSSVGVSHVTNADEYAAALKEAFKYDDKVLVEETVPGTEVE) is an ATP binding site. Mg(2+) contacts are provided by aspartate 297, glutamate 310, and asparagine 312.

The protein belongs to the D-alanine--D-alanine ligase family. Mg(2+) is required as a cofactor. The cofactor is Mn(2+).

It is found in the cytoplasm. It catalyses the reaction 2 D-alanine + ATP = D-alanyl-D-alanine + ADP + phosphate + H(+). Its pathway is cell wall biogenesis; peptidoglycan biosynthesis. Its function is as follows. Cell wall formation. The protein is D-alanine--D-alanine ligase of Lactobacillus helveticus (strain DPC 4571).